Here is a 1111-residue protein sequence, read N- to C-terminus: Kinesin-like protein KIP1 (1111 aa).

A compositionally biased stretch (polar residues) spans 1–11; sequence MARSSLPNRRT. Residues 1-34 are disordered; the sequence is MARSSLPNRRTAQFEANKRRTIAHAPSPSLSNGM. Residues 52–410 form the Kinesin motor domain; it reads NIHVYVRCRS…LEYATRAKSI (359 aa). 141–148 provides a ligand contact to ATP; the sequence is GQTGTGKT. Coiled coils occupy residues 424–510, 648–670, 710–780, and 808–828; these read TCLK…IIQN, KDLNEIYQSHQQFLKNLQNDIKS, KLIK…DQDI, and HNAENTLKTVSQNNESFTNDL. The span at 1007 to 1016 shows a compositional bias: basic and acidic residues; that stretch reads AENKSKDDTS. The segment at 1007-1111 is disordered; sequence AENKSKDDTS…DILQNKKLHQ (105 aa). Composition is skewed to polar residues over residues 1017 to 1038 and 1057 to 1082; these read NSRTCIPNLSTNENFPLSQFSP and SINSAKSNRSKTLPNTEGTGRESQNN.

Belongs to the TRAFAC class myosin-kinesin ATPase superfamily. Kinesin family. BimC subfamily. Might be dimeric.

The protein localises to the cytoplasm. It localises to the cytoskeleton. It is found in the spindle. Functionally, required for assembly of the mitotic spindle. Interacts with spindle microtubules to produce an outwardly directed force acting upon the poles. Following spindle assembly, CIN8 and KIP1 apparently act to oppose a force that draws separated poles back together. This force seems to be mediate by KAR3. The protein is Kinesin-like protein KIP1 (KIP1) of Saccharomyces cerevisiae (strain ATCC 204508 / S288c) (Baker's yeast).